We begin with the raw amino-acid sequence, 184 residues long: MLTMKDVIREGDPILRNVAEEVVIPASEEDTNTLKEMIEFVINSQDPEMAEKYSLRPGIGLAAPQIGISKKMIAVHVTDTDGTLYSHALFNPKIISHSVERTYLQSGEGCLSVDREVPGYVPRYTRITVKATSINGEEVKLRLKGLPAIVFQHEIDHLNGVMFYDHINKENPFAAPDGSKPLER.

Fe cation contacts are provided by cysteine 110 and histidine 153. Glutamate 154 is a catalytic residue. Position 157 (histidine 157) interacts with Fe cation.

This sequence belongs to the polypeptide deformylase family. Fe(2+) is required as a cofactor.

It carries out the reaction N-terminal N-formyl-L-methionyl-[peptide] + H2O = N-terminal L-methionyl-[peptide] + formate. Its function is as follows. Removes the formyl group from the N-terminal Met of newly synthesized proteins. Requires at least a dipeptide for an efficient rate of reaction. N-terminal L-methionine is a prerequisite for activity but the enzyme has broad specificity at other positions. The chain is Peptide deformylase 2 from Bacillus anthracis.